We begin with the raw amino-acid sequence, 129 residues long: Fluoride-specific ion channel FluC 2 (129 aa).

The next 4 helical transmembrane spans lie at 4-24 (LDVM…WWIG), 39-59 (TFLI…LFGV), 65-85 (YGTM…TTFS), and 104-124 (VFYL…GAML). Residues glycine 79 and threonine 82 each coordinate Na(+).

Belongs to the fluoride channel Fluc/FEX (TC 1.A.43) family.

The protein localises to the cell inner membrane. The catalysed reaction is fluoride(in) = fluoride(out). Na(+) is not transported, but it plays an essential structural role and its presence is essential for fluoride channel function. In terms of biological role, fluoride-specific ion channel. Important for reducing fluoride concentration in the cell, thus reducing its toxicity. The chain is Fluoride-specific ion channel FluC 2 from Brucella abortus biovar 1 (strain 9-941).